The following is a 418-amino-acid chain: Fumarylacetoacetase (418 aa).

Asp127 is a binding site for Ca(2+). Catalysis depends on His134, which acts as the Proton acceptor. Residues Glu200, Glu202, and Asp235 each coordinate Ca(2+). Mg(2+) contacts are provided by Asp235, Lys255, and Thr259.

Belongs to the FAH family. Ca(2+) is required as a cofactor. The cofactor is Mg(2+). As to expression, highly expressed in the intestine and the hypodermis.

It carries out the reaction 4-fumarylacetoacetate + H2O = acetoacetate + fumarate + H(+). Its pathway is amino-acid degradation; L-phenylalanine degradation; acetoacetate and fumarate from L-phenylalanine: step 6/6. Fumarylacetoacetase involved in the tyrosine degradation pathway. In Caenorhabditis elegans, this protein is Fumarylacetoacetase.